Here is a 572-residue protein sequence, read N- to C-terminus: Oxygen-dependent choline dehydrogenase (572 aa).

9–38 (DYVIIGGGSAGSVLGARLSEDKDKNVLVLE) lines the FAD pocket. His-477 acts as the Proton acceptor in catalysis.

It belongs to the GMC oxidoreductase family. FAD serves as cofactor.

It catalyses the reaction choline + A = betaine aldehyde + AH2. The catalysed reaction is betaine aldehyde + NAD(+) + H2O = glycine betaine + NADH + 2 H(+). The protein operates within amine and polyamine biosynthesis; betaine biosynthesis via choline pathway; betaine aldehyde from choline (cytochrome c reductase route): step 1/1. Its function is as follows. Involved in the biosynthesis of the osmoprotectant glycine betaine. Catalyzes the oxidation of choline to betaine aldehyde and betaine aldehyde to glycine betaine at the same rate. The sequence is that of Oxygen-dependent choline dehydrogenase from Staphylococcus epidermidis (strain ATCC 12228 / FDA PCI 1200).